Reading from the N-terminus, the 367-residue chain is Flagellar P-ring protein (367 aa).

An N-terminal signal peptide occupies residues 1–18 (MFRALITALFCFSGLALA).

The protein belongs to the FlgI family. As to quaternary structure, the basal body constitutes a major portion of the flagellar organelle and consists of four rings (L,P,S, and M) mounted on a central rod.

It localises to the periplasm. It is found in the bacterial flagellum basal body. Functionally, assembles around the rod to form the L-ring and probably protects the motor/basal body from shearing forces during rotation. In Rhizorhabdus wittichii (strain DSM 6014 / CCUG 31198 / JCM 15750 / NBRC 105917 / EY 4224 / RW1) (Sphingomonas wittichii), this protein is Flagellar P-ring protein.